Reading from the N-terminus, the 710-residue chain is Probable GTP diphosphokinase RSH2, chloroplastic (710 aa).

A chloroplast-targeting transit peptide spans 1–63 (MVVATTIALY…SSLFSSASVK (63 aa)). The HD domain maps to 233-337 (YLQHCVETAM…IKLADRLHNM (105 aa)).

The protein belongs to the RelA/SpoT family.

It localises to the plastid. The protein resides in the chloroplast. It carries out the reaction GTP + ATP = guanosine 3'-diphosphate 5'-triphosphate + AMP. Functionally, probable ppGpp (guanosine 3'-diphosphate 5'-diphosphate) synthetase that may be involved in a rapid plant ppGpp-mediated response to pathogens and other stresses. This is Probable GTP diphosphokinase RSH2, chloroplastic (RSH2) from Arabidopsis thaliana (Mouse-ear cress).